We begin with the raw amino-acid sequence, 1114 residues long: WD repeat-containing protein 72 (1114 aa).

WD repeat units lie at residues 15 to 54, 60 to 102, 160 to 197, 327 to 373, 413 to 452, 470 to 515, and 566 to 605; these read APPH…KISA, GHSA…CVEK, KCMC…NSIQ, EENK…SKFD, GMTA…KAGL, GHHQ…ILHT, and KHLF…LERH. Disordered regions lie at residues 634–658 and 749–798; these read SETH…VPCP and SLQT…PPRK. Residues 780–796 show a composition bias toward basic residues; it reads KRQKKMKSSKKAHPKPP. Residues serine 1093 and serine 1095 each carry the phosphoserine modification.

Expressed in maturation stage ameloblasts (at protein level).

The protein resides in the cytoplasmic vesicle. In terms of biological role, plays a major role in formation of tooth enamel. Specifically required during the maturation phase of amelogenesis for normal formation of the enamel matrix and clearance of enamel proteins. May be involved in localization of the calcium transporter SLC24A4 to the ameloblast cell membrane. This is WD repeat-containing protein 72 from Mus musculus (Mouse).